The primary structure comprises 271 residues: MTLTRRIIPCLDIKDGRVVKGTNFLGLRDAGDPVELACRYNEQGADEVVFLDITASRENRGMIIDVIQRAADELFLPLTVGGGIRTLDDVQKTLRAGADKVSINTSAVQNPALISEAAQAFGTQCVVVAIDVKRRTSPEPGKTMIPLPDQSSCWYEVVTHGGSQPTGIDAIAWAKEAENRGAGEILLTSMETDGTKEGFDIPITSAISESVGIPVIASGGVGTFDHFYEGFVYGKADAALAASVFHYGEMTIADVKDYLSKKGIAIRPHTQ.

Residues Asp12 and Asp131 contribute to the active site.

This sequence belongs to the HisA/HisF family. As to quaternary structure, heterodimer of HisH and HisF.

It localises to the cytoplasm. It carries out the reaction 5-[(5-phospho-1-deoxy-D-ribulos-1-ylimino)methylamino]-1-(5-phospho-beta-D-ribosyl)imidazole-4-carboxamide + L-glutamine = D-erythro-1-(imidazol-4-yl)glycerol 3-phosphate + 5-amino-1-(5-phospho-beta-D-ribosyl)imidazole-4-carboxamide + L-glutamate + H(+). The protein operates within amino-acid biosynthesis; L-histidine biosynthesis; L-histidine from 5-phospho-alpha-D-ribose 1-diphosphate: step 5/9. Functionally, IGPS catalyzes the conversion of PRFAR and glutamine to IGP, AICAR and glutamate. The HisF subunit catalyzes the cyclization activity that produces IGP and AICAR from PRFAR using the ammonia provided by the HisH subunit. This Methanospirillum hungatei JF-1 (strain ATCC 27890 / DSM 864 / NBRC 100397 / JF-1) protein is Imidazole glycerol phosphate synthase subunit HisF.